The following is a 176-amino-acid chain: ATP-dependent protease subunit HslV (176 aa).

T2 is an active-site residue. Positions 157, 160, and 163 each coordinate Na(+).

The protein belongs to the peptidase T1B family. HslV subfamily. A double ring-shaped homohexamer of HslV is capped on each side by a ring-shaped HslU homohexamer. The assembly of the HslU/HslV complex is dependent on binding of ATP.

It localises to the cytoplasm. It carries out the reaction ATP-dependent cleavage of peptide bonds with broad specificity.. Its activity is regulated as follows. Allosterically activated by HslU binding. Its function is as follows. Protease subunit of a proteasome-like degradation complex believed to be a general protein degrading machinery. This chain is ATP-dependent protease subunit HslV, found in Pseudomonas putida (strain ATCC 47054 / DSM 6125 / CFBP 8728 / NCIMB 11950 / KT2440).